A 264-amino-acid chain; its full sequence is S-adenosylmethionine decarboxylase proenzyme (264 aa).

The active-site Schiff-base intermediate with substrate; via pyruvic acid is Ser112. Ser112 is subject to Pyruvic acid (Ser); by autocatalysis. His117 (proton acceptor; for processing activity) is an active-site residue. The active-site Proton donor; for catalytic activity is Cys140.

The protein belongs to the prokaryotic AdoMetDC family. Type 2 subfamily. In terms of assembly, heterooctamer of four alpha and four beta chains arranged as a tetramer of alpha/beta heterodimers. It depends on pyruvate as a cofactor. Post-translationally, is synthesized initially as an inactive proenzyme. Formation of the active enzyme involves a self-maturation process in which the active site pyruvoyl group is generated from an internal serine residue via an autocatalytic post-translational modification. Two non-identical subunits are generated from the proenzyme in this reaction, and the pyruvate is formed at the N-terminus of the alpha chain, which is derived from the carboxyl end of the proenzyme. The post-translation cleavage follows an unusual pathway, termed non-hydrolytic serinolysis, in which the side chain hydroxyl group of the serine supplies its oxygen atom to form the C-terminus of the beta chain, while the remainder of the serine residue undergoes an oxidative deamination to produce ammonia and the pyruvoyl group blocking the N-terminus of the alpha chain.

It carries out the reaction S-adenosyl-L-methionine + H(+) = S-adenosyl 3-(methylsulfanyl)propylamine + CO2. It functions in the pathway amine and polyamine biosynthesis; S-adenosylmethioninamine biosynthesis; S-adenosylmethioninamine from S-adenosyl-L-methionine: step 1/1. Its function is as follows. Catalyzes the decarboxylation of S-adenosylmethionine to S-adenosylmethioninamine (dcAdoMet), the propylamine donor required for the synthesis of the polyamines spermine and spermidine from the diamine putrescine. The sequence is that of S-adenosylmethionine decarboxylase proenzyme from Shigella dysenteriae serotype 1 (strain Sd197).